The primary structure comprises 265 residues: uncharacterized protein (265 aa).

The disordered stretch occupies residues 233 to 265; sequence STACGSDQRPTRLPRASCSSRSISGSAARPWKR. The span at 247–265 shows a compositional bias: low complexity; the sequence is RASCSSRSISGSAARPWKR.

This is an uncharacterized protein from Escherichia coli.